The sequence spans 341 residues: KH domain-containing RNA-binding protein QKI (341 aa).

A qua1 domain; involved in homodimerization region spans residues P11 to L82. The KH domain maps to Y87–V153. The segment at A182–A213 is qua2 domain; involved in RNA binding. At S188 the chain carries Phosphoserine. Position 227 is an omega-N-methylarginine (R227). An Asymmetric dimethylarginine; by CARM1; alternate modification is found at R242. An Omega-N-methylarginine; alternate modification is found at R242. R256 is modified (omega-N-methylarginine). The SH3-binding signature appears at P276–P279. The Nuclear localization signal motif lies at R324–R330.

It belongs to the quaking family. In terms of assembly, homodimer; does not require RNA to homodimerize. Able to heterodimerize with BICC1. Methylated by PRMT1. In terms of processing, tyrosine phosphorylated at its C-terminus, probably by FYN. Phosphorylation leads to decreased mRNA-binding affinity, affecting transport and/or stabilization of MBP mRNA. Post-translationally, ubiquitinated by RNF6 in macrophages, leading to its degradation. As to expression, present in myelinating oligodendrocytes (at protein level).

It localises to the nucleus. It is found in the cytoplasm. RNA reader protein, which recognizes and binds specific RNAs, thereby regulating RNA metabolic processes, such as pre-mRNA splicing, circular RNA (circRNA) formation, mRNA export, mRNA stability and/or translation. Involved in various cellular processes, such as mRNA storage into stress granules, apoptosis, lipid deposition, interferon response, glial cell fate and development. Binds to the 5'-NACUAAY-N(1,20)-UAAY-3' RNA core sequence. Acts as a mRNA modification reader that specifically recognizes and binds mRNA transcripts modified by internal N(7)-methylguanine (m7G). Promotes the formation of circular RNAs (circRNAs) during the epithelial to mesenchymal transition and in cardiomyocytes: acts by binding to sites flanking circRNA-forming exons. CircRNAs are produced by back-splicing circularization of pre-mRNAs. Plays a central role in myelinization via 3 distinct mechanisms. First, acts by protecting and promoting stability of target mRNAs such as MBP, SIRT2 and CDKN1B, which promotes oligodendrocyte differentiation. Second, participates in mRNA transport by regulating the nuclear export of MBP mRNA. Finally, indirectly regulates mRNA splicing of MAG pre-mRNA during oligodendrocyte differentiation by acting as a negative regulator of MAG exon 12 alternative splicing: acts by binding to HNRNPA1 mRNA splicing factor, preventing its translation. Involved in microglia differentiation and remyelination by regulating microexon alternative splicing of the Rho GTPase pathway. Involved in macrophage differentiation: promotes monocyte differentiation by regulating pre-mRNA splicing in naive peripheral blood monocytes. Acts as an important regulator of muscle development: required for the contractile function of cardiomyocytes by regulating alternative splicing of cardiomyocyte transcripts. Acts as a negative regulator of thermogenesis by decreasing stability, nuclear export and translation of mRNAs encoding PPARGC1A and UCP1. Also required for visceral endoderm function and blood vessel development. May also play a role in smooth muscle development. In addition to its RNA-binding activity, also acts as a nuclear transcription coactivator for SREBF2/SREBP2. The protein is KH domain-containing RNA-binding protein QKI of Rattus norvegicus (Rat).